Here is a 406-residue protein sequence, read N- to C-terminus: UPF0754 membrane protein SYNPCC7002_A1087 (406 aa).

Residues 384 to 404 (IVNLGGVLGFLVGVAQSVILL) form a helical membrane-spanning segment.

This sequence belongs to the UPF0754 family.

It localises to the cell inner membrane. This chain is UPF0754 membrane protein SYNPCC7002_A1087, found in Picosynechococcus sp. (strain ATCC 27264 / PCC 7002 / PR-6) (Agmenellum quadruplicatum).